The following is a 145-amino-acid chain: MRLHLITVGEPKLTYARLGWEEYEKRLRRYHKLQVTRVSGRTQAQESEAVRRAAGKAPLVLLDPRGRQFSSPDLSAYLDAQAVGGVGELAFAIGGPDGHTDELRSSAHLLWGLGQLTLPHDLAMVVLVEALYRASTISAGEPYHR.

S-adenosyl-L-methionine-binding positions include L62, G94, and 113–118 (LGQLTL).

The protein belongs to the RNA methyltransferase RlmH family. As to quaternary structure, homodimer.

The protein localises to the cytoplasm. The enzyme catalyses pseudouridine(1915) in 23S rRNA + S-adenosyl-L-methionine = N(3)-methylpseudouridine(1915) in 23S rRNA + S-adenosyl-L-homocysteine + H(+). In terms of biological role, specifically methylates the pseudouridine at position 1915 (m3Psi1915) in 23S rRNA. This Deinococcus deserti (strain DSM 17065 / CIP 109153 / LMG 22923 / VCD115) protein is Ribosomal RNA large subunit methyltransferase H.